Reading from the N-terminus, the 508-residue chain is Asparagine--tRNA ligase (508 aa).

It belongs to the class-II aminoacyl-tRNA synthetase family. As to quaternary structure, homodimer.

It is found in the cytoplasm. The catalysed reaction is tRNA(Asn) + L-asparagine + ATP = L-asparaginyl-tRNA(Asn) + AMP + diphosphate + H(+). The protein is Asparagine--tRNA ligase of Streptococcus suis (strain 05ZYH33).